We begin with the raw amino-acid sequence, 305 residues long: Chromatin modification-related protein png2 (305 aa).

The interval 135 to 239 is disordered; it reads TVTPQTSERR…PLVKHDTLDS (105 aa). Low complexity predominate over residues 153–167; that stretch reads NQHSQQYSSQERSSS. Composition is skewed to polar residues over residues 168 to 183 and 195 to 210; these read YNNF…SYHT and KSSS…APQS. Y181 bears the Phosphotyrosine mark. Position 183 is a phosphothreonine (T183). 2 positions are modified to phosphoserine: S197 and S198. Residues 211 to 223 show a composition bias toward basic and acidic residues; sequence TERRPVRRSESRL. The PHD-type zinc finger occupies 248-297; it reads QLYCYCQQVSYGQMIGCDNENCKREWFHLPCVGLVEPPKGIWYCKECEEL. Zn(2+) contacts are provided by C251, C253, C264, C269, H275, C278, C291, and C294.

The protein belongs to the ING family. Interacts with H3K4me3 and to a lesser extent with H3K4me2. Component of the clr6 histone deacetylase complex I'composed of at least clr6, png2, prw1, pst1 and sds3.

It localises to the cytoplasm. It is found in the nucleus. In terms of biological role, component of the clr6 histone deacetylase complex I' responsible for the deacetylation of lysine residues on the N-terminal part of the core histones (H2A, H2B, H3 and H4). Histone deacetylation gives a tag for epigenetic repression and plays an important role in transcriptional regulation, cell cycle progression and developmental events. Has a role in silencing of mating type genes. The sequence is that of Chromatin modification-related protein png2 (png2) from Schizosaccharomyces pombe (strain 972 / ATCC 24843) (Fission yeast).